Reading from the N-terminus, the 73-residue chain is UPF0235 protein HY04AAS1_1378 (73 aa).

It belongs to the UPF0235 family.

The sequence is that of UPF0235 protein HY04AAS1_1378 from Hydrogenobaculum sp. (strain Y04AAS1).